The sequence spans 250 residues: Phosphoribosylaminoimidazole-succinocarboxamide synthase (250 aa).

This sequence belongs to the SAICAR synthetase family.

The enzyme catalyses 5-amino-1-(5-phospho-D-ribosyl)imidazole-4-carboxylate + L-aspartate + ATP = (2S)-2-[5-amino-1-(5-phospho-beta-D-ribosyl)imidazole-4-carboxamido]succinate + ADP + phosphate + 2 H(+). Its pathway is purine metabolism; IMP biosynthesis via de novo pathway; 5-amino-1-(5-phospho-D-ribosyl)imidazole-4-carboxamide from 5-amino-1-(5-phospho-D-ribosyl)imidazole-4-carboxylate: step 1/2. This chain is Phosphoribosylaminoimidazole-succinocarboxamide synthase, found in Bifidobacterium longum subsp. infantis (strain ATCC 15697 / DSM 20088 / JCM 1222 / NCTC 11817 / S12).